A 492-amino-acid chain; its full sequence is MLTINLLLAVGALFWIYFLWSRRRLYFLMLKIPGPIGLPILGSSLENIITYKRKLSFRTKYLNKYGSTILTWMGPVPFIVTRDPKVVEDIFSSPDCHNKSQHIVNAITSCMGNGLLGKQDPHWLDRRKHFNPSFKQDLLLSFFHIFDAETKVLMNLLDTYVDKGEIDVVPEMLRWSFKIAAQTTMGSEVKHDEHFKNGSLVESFESLISHSTLNILMPLVQNRMISKICGYDKLRADNFSRIQKMLDNVVNKKVNPLPKTDSDPESNIVINRAMELYRKGDITYMDVKSECCIMIAAGYDTSALTVYHALFLLANHPEHQEAVFEELNGVFPDAGHFGITYPDMQKLDYLERVIKETLRLIPAIPITARETKNDVRLSNGVLIPKGVVIGIDMFHTHRNPEVWGPDADNFNPDNFLAENMEQKHPYAYIPFARGKRNCIGSKYAMMSSKFALCRILRNYKISTSTLYKDLVYVDNMTMKLAEYPRLKLQRRG.

Cys438 lines the heme pocket.

It belongs to the cytochrome P450 family. Heme is required as a cofactor.

The protein localises to the endoplasmic reticulum membrane. It localises to the microsome membrane. Functionally, may be involved in the metabolism of insect hormones and in the breakdown of synthetic insecticides. The protein is Probable cytochrome P450 313a1 (Cyp313a1) of Drosophila melanogaster (Fruit fly).